The sequence spans 333 residues: Glycerol-3-phosphate dehydrogenase [NAD(P)+] (333 aa).

Residues Ser-10, Trp-11, His-31, Arg-32, and Lys-105 each coordinate NADPH. Lys-105, Gly-136, and Ser-138 together coordinate sn-glycerol 3-phosphate. Ala-140 contacts NADPH. Sn-glycerol 3-phosphate-binding residues include Lys-191, Asp-244, Ser-254, Arg-255, and Asn-256. Lys-191 serves as the catalytic Proton acceptor. Residue Arg-255 participates in NADPH binding. 2 residues coordinate NADPH: Val-279 and Glu-281.

Belongs to the NAD-dependent glycerol-3-phosphate dehydrogenase family.

The protein localises to the cytoplasm. It carries out the reaction sn-glycerol 3-phosphate + NAD(+) = dihydroxyacetone phosphate + NADH + H(+). It catalyses the reaction sn-glycerol 3-phosphate + NADP(+) = dihydroxyacetone phosphate + NADPH + H(+). Its pathway is membrane lipid metabolism; glycerophospholipid metabolism. In terms of biological role, catalyzes the reduction of the glycolytic intermediate dihydroxyacetone phosphate (DHAP) to sn-glycerol 3-phosphate (G3P), the key precursor for phospholipid synthesis. The polypeptide is Glycerol-3-phosphate dehydrogenase [NAD(P)+] (Chlorobium limicola (strain DSM 245 / NBRC 103803 / 6330)).